A 456-amino-acid chain; its full sequence is UDP-N-acetylmuramoylalanine--D-glutamate ligase (456 aa).

113-119 is an ATP binding site; the sequence is GTNGKTT.

This sequence belongs to the MurCDEF family.

The protein resides in the cytoplasm. The catalysed reaction is UDP-N-acetyl-alpha-D-muramoyl-L-alanine + D-glutamate + ATP = UDP-N-acetyl-alpha-D-muramoyl-L-alanyl-D-glutamate + ADP + phosphate + H(+). The protein operates within cell wall biogenesis; peptidoglycan biosynthesis. Cell wall formation. Catalyzes the addition of glutamate to the nucleotide precursor UDP-N-acetylmuramoyl-L-alanine (UMA). The chain is UDP-N-acetylmuramoylalanine--D-glutamate ligase from Crocosphaera subtropica (strain ATCC 51142 / BH68) (Cyanothece sp. (strain ATCC 51142)).